The primary structure comprises 162 residues: ATP synthase subunit delta, mitochondrial (162 aa).

The transit peptide at 1 to 25 (MSSLRLLASAARRATTHVAYTRRGY) directs the protein to the mitochondrion.

It belongs to the ATPase epsilon chain family. F-type ATPases have 2 components, CF(1) - the catalytic core - and CF(0) - the membrane proton channel. CF(1) has five subunits: alpha(3), beta(3), gamma(1), delta(1), epsilon(1). CF(0) has three main subunits: a, b and c.

It is found in the mitochondrion. The protein resides in the mitochondrion inner membrane. In terms of biological role, mitochondrial membrane ATP synthase (F(1)F(0) ATP synthase or Complex V) produces ATP from ADP in the presence of a proton gradient across the membrane which is generated by electron transport complexes of the respiratory chain. F-type ATPases consist of two structural domains, F(1) - containing the extramembraneous catalytic core, and F(0) - containing the membrane proton channel, linked together by a central stalk and a peripheral stalk. During catalysis, ATP turnover in the catalytic domain of F(1) is coupled via a rotary mechanism of the central stalk subunits to proton translocation. Part of the complex F(1) domain and of the central stalk which is part of the complex rotary element. Rotation of the central stalk against the surrounding alpha(3)beta(3) subunits leads to hydrolysis of ATP in three separate catalytic sites on the beta subunits. This is ATP synthase subunit delta, mitochondrial (atpD) from Agaricus bisporus (White button mushroom).